The chain runs to 557 residues: Dihydroxy-acid dehydratase 1 (557 aa).

C50 contributes to the [2Fe-2S] cluster binding site. D82 is a Mg(2+) binding site. Residue C123 participates in [2Fe-2S] cluster binding. The Mg(2+) site is built by D124 and K125. The residue at position 125 (K125) is an N6-carboxylysine. C195 provides a ligand contact to [2Fe-2S] cluster. Residue E447 coordinates Mg(2+). The Proton acceptor role is filled by S473.

This sequence belongs to the IlvD/Edd family. Homodimer. [2Fe-2S] cluster is required as a cofactor. Requires Mg(2+) as cofactor.

The catalysed reaction is (2R)-2,3-dihydroxy-3-methylbutanoate = 3-methyl-2-oxobutanoate + H2O. It carries out the reaction (2R,3R)-2,3-dihydroxy-3-methylpentanoate = (S)-3-methyl-2-oxopentanoate + H2O. It functions in the pathway amino-acid biosynthesis; L-isoleucine biosynthesis; L-isoleucine from 2-oxobutanoate: step 3/4. It participates in amino-acid biosynthesis; L-valine biosynthesis; L-valine from pyruvate: step 3/4. Its function is as follows. Functions in the biosynthesis of branched-chain amino acids. Catalyzes the dehydration of (2R,3R)-2,3-dihydroxy-3-methylpentanoate (2,3-dihydroxy-3-methylvalerate) into 2-oxo-3-methylpentanoate (2-oxo-3-methylvalerate) and of (2R)-2,3-dihydroxy-3-methylbutanoate (2,3-dihydroxyisovalerate) into 2-oxo-3-methylbutanoate (2-oxoisovalerate), the penultimate precursor to L-isoleucine and L-valine, respectively. The chain is Dihydroxy-acid dehydratase 1 from Cupriavidus pinatubonensis (strain JMP 134 / LMG 1197) (Cupriavidus necator (strain JMP 134)).